Reading from the N-terminus, the 79-residue chain is Sec-independent protein translocase protein TatA (79 aa).

A helical membrane pass occupies residues 1–21; that stretch reads MGGWSSPSHWLIILLIVVLLF. The segment covering 49–61 has biased composition (basic and acidic residues); the sequence is EVAKNTQKIEENK. Positions 49 to 79 are disordered; the sequence is EVAKNTQKIEENKNTTNNTNADASIDETKKA.

Belongs to the TatA/E family. The Tat system comprises two distinct complexes: a TatABC complex, containing multiple copies of TatA, TatB and TatC subunits, and a separate TatA complex, containing only TatA subunits. Substrates initially bind to the TatABC complex, which probably triggers association of the separate TatA complex to form the active translocon.

It is found in the cell inner membrane. In terms of biological role, part of the twin-arginine translocation (Tat) system that transports large folded proteins containing a characteristic twin-arginine motif in their signal peptide across membranes. TatA could form the protein-conducting channel of the Tat system. The protein is Sec-independent protein translocase protein TatA of Campylobacter jejuni subsp. doylei (strain ATCC BAA-1458 / RM4099 / 269.97).